Consider the following 425-residue polypeptide: Enolase (425 aa).

Gln163 serves as a coordination point for (2R)-2-phosphoglycerate. Glu205 serves as the catalytic Proton donor. Mg(2+) contacts are provided by Asp242, Glu285, and Asp312. Positions 337, 366, 367, and 388 each coordinate (2R)-2-phosphoglycerate. Lys337 serves as the catalytic Proton acceptor.

This sequence belongs to the enolase family. Mg(2+) is required as a cofactor.

The protein localises to the cytoplasm. It localises to the secreted. The protein resides in the cell surface. It catalyses the reaction (2R)-2-phosphoglycerate = phosphoenolpyruvate + H2O. The protein operates within carbohydrate degradation; glycolysis; pyruvate from D-glyceraldehyde 3-phosphate: step 4/5. Functionally, catalyzes the reversible conversion of 2-phosphoglycerate (2-PG) into phosphoenolpyruvate (PEP). It is essential for the degradation of carbohydrates via glycolysis. The sequence is that of Enolase from Rhodospirillum rubrum (strain ATCC 11170 / ATH 1.1.1 / DSM 467 / LMG 4362 / NCIMB 8255 / S1).